Here is a 242-residue protein sequence, read N- to C-terminus: Lectin-like protein At1g53060 (242 aa).

Residues 3–237 (FHGDAEYASE…RHEILDWSFE (235 aa)) form a legume-lectin like region. At Ser-207 the chain carries Phosphoserine.

Belongs to the leguminous lectin family.

The chain is Lectin-like protein At1g53060 from Arabidopsis thaliana (Mouse-ear cress).